The chain runs to 149 residues: Transcriptional repressor NrdR (149 aa).

A zinc finger lies at 3 to 34 (CPFCAAEETKVVDSRLAADGYQIRRRRECTSC). The region spanning 49–139 (PYVIKNNGNR…VYLSFDDIEE (91 aa)) is the ATP-cone domain.

This sequence belongs to the NrdR family. Zn(2+) is required as a cofactor.

Negatively regulates transcription of bacterial ribonucleotide reductase nrd genes and operons by binding to NrdR-boxes. The polypeptide is Transcriptional repressor NrdR (Actinobacillus pleuropneumoniae serotype 3 (strain JL03)).